The primary structure comprises 443 residues: MSEMTPREIVSELNKHIIGQDNAKRSVAIALRNRWRRMQLDEELRHEVTPKNILMIGPTGVGKTEIARRLAKLANAPFIKVEATKFTEVGYVGKEVDSIIRDLADSAMKMVRVQAIEKNRYRAEEMAEERILDVLIPPAKNNWGQNEQPQEPSAARQAFRKKLREGQLDDKEIEIDLAAAPMGVEIMSPPGMEEMTSQLQSMFQNLGGQKQKPRKLKIKDAMKLLIEEEAAKLVNPEELKQDAIDAVEQHGIVFIDEIDKICKRGESNGPDVSREGVQRDLLPLVEGCTVSTKHGMVKTDHILFIASGAFQVAKPSDLIPELQGRLPIRVELQALTTDDFERILTEPNASITVQYKALMATEGVTIEFTADGIKRIAQAAWQVNETTENIGARRLHTVLERLVEDISYEASDLNGQSITIDADYVSKHLDALVADEDLSRFIL.

ATP is bound by residues isoleucine 18, 60-65 (GVGKTE), aspartate 256, glutamate 321, and arginine 393.

Belongs to the ClpX chaperone family. HslU subfamily. In terms of assembly, a double ring-shaped homohexamer of HslV is capped on each side by a ring-shaped HslU homohexamer. The assembly of the HslU/HslV complex is dependent on binding of ATP.

Its subcellular location is the cytoplasm. ATPase subunit of a proteasome-like degradation complex; this subunit has chaperone activity. The binding of ATP and its subsequent hydrolysis by HslU are essential for unfolding of protein substrates subsequently hydrolyzed by HslV. HslU recognizes the N-terminal part of its protein substrates and unfolds these before they are guided to HslV for hydrolysis. This is ATP-dependent protease ATPase subunit HslU from Enterobacter sp. (strain 638).